Here is a 442-residue protein sequence, read N- to C-terminus: Proline--tRNA ligase (442 aa).

This sequence belongs to the class-II aminoacyl-tRNA synthetase family. ProS type 2 subfamily. Homodimer.

The protein resides in the cytoplasm. It catalyses the reaction tRNA(Pro) + L-proline + ATP = L-prolyl-tRNA(Pro) + AMP + diphosphate. Its function is as follows. Catalyzes the attachment of proline to tRNA(Pro) in a two-step reaction: proline is first activated by ATP to form Pro-AMP and then transferred to the acceptor end of tRNA(Pro). This is Proline--tRNA ligase from Brucella canis (strain ATCC 23365 / NCTC 10854 / RM-666).